Reading from the N-terminus, the 494-residue chain is AAA-ATPase At2g18190 (494 aa).

The chain crosses the membrane as a helical span at residues 13–29 (SSLFTAYASLTGFLMLF). 251 to 258 (GPPGTGKS) is an ATP binding site. A compositionally biased stretch (basic and acidic residues) spans 459–470 (TCRKLDGDDKHN). Residues 459–494 (TCRKLDGDDKHNVSSTNDLKKTKKKKKGGKGKAKGN) form a disordered region. Residues 479-494 (KTKKKKKGGKGKAKGN) are compositionally biased toward basic residues.

It belongs to the AAA ATPase family. BCS1 subfamily. The cofactor is Mg(2+).

It localises to the membrane. It carries out the reaction ATP + H2O = ADP + phosphate + H(+). The sequence is that of AAA-ATPase At2g18190 from Arabidopsis thaliana (Mouse-ear cress).